The chain runs to 341 residues: Porin-like protein L (341 aa).

An N-terminal signal peptide occupies residues M1–A21.

It belongs to the Gram-negative porin family. Homotrimer.

The protein resides in the cell outer membrane. Its function is as follows. Forms pores that allow passive diffusion of small molecules across the outer membrane. This Photobacterium profundum (strain SS9) protein is Porin-like protein L (ompL).